We begin with the raw amino-acid sequence, 380 residues long: Hydrogenase maturation factor HypD2 (380 aa).

Positions 36, 64, and 67 each coordinate Fe cation.

This sequence belongs to the HypD family. [4Fe-4S] cluster is required as a cofactor.

Its pathway is protein modification; [NiFe] hydrogenase maturation. Functionally, involved in the maturation of [NiFe] hydrogenases. Involved in the biosynthesis of the Fe(CN)(2)CO cofactor. This Bradyrhizobium diazoefficiens (strain JCM 10833 / BCRC 13528 / IAM 13628 / NBRC 14792 / USDA 110) protein is Hydrogenase maturation factor HypD2 (hypD2).